Reading from the N-terminus, the 606-residue chain is Peptide-N(4)-(N-acetyl-beta-glucosaminyl)asparagine amidase (606 aa).

One can recognise a Thioredoxin domain in the interval 2 to 108 (PVTEVGSLPE…IAEKIRQHYS (107 aa)). Zn(2+)-binding residues include C191, C194, C225, and C228. Residue C251 is the Nucleophile of the active site. Active-site residues include H278 and D295. Residues 404–606 (DLGGRITGSE…SFSVKIWMKN (203 aa)) enclose the PAW domain.

It belongs to the transglutaminase-like superfamily. PNGase family. The cofactor is Zn(2+).

The protein resides in the cytoplasm. It localises to the endoplasmic reticulum. The enzyme catalyses Hydrolysis of an N(4)-(acetyl-beta-D-glucosaminyl)asparagine residue in which the glucosamine residue may be further glycosylated, to yield a (substituted) N-acetyl-beta-D-glucosaminylamine and a peptide containing an aspartate residue.. With respect to regulation, inhibited by Zn(2+) and z-VAD-fmk (caspase inhibitor) but unaffected by EDTA. In terms of biological role, specifically deglycosylates the denatured form of N-linked glycoproteins in the cytoplasm and assists their proteasome-mediated degradation. Cleaves the beta-aspartyl-glucosamine (GlcNAc) of the glycan and the amide side chain of Asn, converting Asn to Asp. Prefers proteins containing high-mannose over those bearing complex type oligosaccharides. Can recognize misfolded proteins in the endoplasmic reticulum that are exported to the cytosol to be destroyed and deglycosylate them, while it has no activity toward native proteins. Deglycosylation is a prerequisite for subsequent proteasome-mediated degradation of some, but not all, misfolded glycoproteins. Also displays oxidoreductase (thioredoxin) activity. Involved in regulating the expression of proteasomal subunits such as rpt-3 in order to confer resistance to proteasomal dysfunction. The protein is Peptide-N(4)-(N-acetyl-beta-glucosaminyl)asparagine amidase (png-1) of Caenorhabditis elegans.